A 486-amino-acid chain; its full sequence is Protein nucleotidyltransferase YdiU (486 aa).

Residues glycine 89, glycine 91, arginine 92, lysine 112, aspartate 124, glycine 125, arginine 175, and arginine 182 each contribute to the ATP site. Catalysis depends on aspartate 251, which acts as the Proton acceptor. Asparagine 252 and aspartate 261 together coordinate Mg(2+). Aspartate 261 contributes to the ATP binding site.

The protein belongs to the SELO family. Mg(2+) is required as a cofactor. It depends on Mn(2+) as a cofactor.

The enzyme catalyses L-seryl-[protein] + ATP = 3-O-(5'-adenylyl)-L-seryl-[protein] + diphosphate. The catalysed reaction is L-threonyl-[protein] + ATP = 3-O-(5'-adenylyl)-L-threonyl-[protein] + diphosphate. It catalyses the reaction L-tyrosyl-[protein] + ATP = O-(5'-adenylyl)-L-tyrosyl-[protein] + diphosphate. It carries out the reaction L-histidyl-[protein] + UTP = N(tele)-(5'-uridylyl)-L-histidyl-[protein] + diphosphate. The enzyme catalyses L-seryl-[protein] + UTP = O-(5'-uridylyl)-L-seryl-[protein] + diphosphate. The catalysed reaction is L-tyrosyl-[protein] + UTP = O-(5'-uridylyl)-L-tyrosyl-[protein] + diphosphate. In terms of biological role, nucleotidyltransferase involved in the post-translational modification of proteins. It can catalyze the addition of adenosine monophosphate (AMP) or uridine monophosphate (UMP) to a protein, resulting in modifications known as AMPylation and UMPylation. The sequence is that of Protein nucleotidyltransferase YdiU from Shouchella clausii (strain KSM-K16) (Alkalihalobacillus clausii).